A 78-amino-acid polypeptide reads, in one-letter code: Small ribosomal subunit protein uS17 (78 aa).

Belongs to the universal ribosomal protein uS17 family. In terms of assembly, part of the 30S ribosomal subunit.

Functionally, one of the primary rRNA binding proteins, it binds specifically to the 5'-end of 16S ribosomal RNA. The sequence is that of Small ribosomal subunit protein uS17 from Wolbachia pipientis wMel.